Here is a 160-residue protein sequence, read N- to C-terminus: Probable dihydroneopterin aldolase 3 (160 aa).

Residues Glu59, Phe91, and 110-111 contribute to the substrate site; that span reads YE. The active-site Proton donor/acceptor is Lys137.

Belongs to the DHNA family. As to quaternary structure, homooctamer. Forms a hollow cylinder assembled from two ring-shaped tetramers. In terms of tissue distribution, expressed at very low levels in siliques.

It catalyses the reaction 7,8-dihydroneopterin = 6-hydroxymethyl-7,8-dihydropterin + glycolaldehyde. It functions in the pathway cofactor biosynthesis; tetrahydrofolate biosynthesis; 2-amino-4-hydroxy-6-hydroxymethyl-7,8-dihydropteridine diphosphate from 7,8-dihydroneopterin triphosphate: step 3/4. Functionally, catalyzes the conversion of 7,8-dihydroneopterin into 6-hydroxymethyl-7,8-dihydropterin, a biosynthetic precursor of the vitamin tetrahydrofolate. Can use L-threo-dihydroneopterin and D-erythro-dihydroneopterin as substrates for the formation of 6-hydroxymethyldihydropterin, but it can also catalyze the epimerization of carbon 2' of dihydroneopterin and dihydromonapterin. The protein is Probable dihydroneopterin aldolase 3 of Arabidopsis thaliana (Mouse-ear cress).